Here is a 65-residue protein sequence, read N- to C-terminus: U15-hexatoxin-Mg1b (65 aa).

Post-translationally, contains 4 disulfide bonds. In terms of tissue distribution, expressed by the venom gland.

It is found in the secreted. Its function is as follows. In vivo, intrathorax injection into crickets causes death. The protein is U15-hexatoxin-Mg1b of Macrothele gigas (Japanese funnel web spider).